An 814-amino-acid polypeptide reads, in one-letter code: MRVKDPTKALPEKAKRSKRPTVPHDEDSSDDIAVGLTCQHVSHAISVNHVKRAIAENLWSVCSECLKERRFYDGQLVLTSDIWLCLKCGFQGCGKNSESQHSLKHFKSSRTEPHCIIINLSTWIIWCYECDEKLSTHCNKKVLAQIVDFLQKHASKTQTSAFSRIMKLCEEKCETDEIQKGGKCRNLSVRGITNLGNTCFFNAVMQNLAQTYTLTDLMNEIKESSTKLKIFPSSDSQLDPLVVELSRPGPLTSALFLFLHSMKETEKGPLSPKVLFNQLCQKAPRFKDFQQQDSQELLHYLLDAVRTEETKRIQASILKAFNNPTTKTADDETRKKVKAYGKEGVKMNFIDRIFIGELTSTVMCEECANISTVKDPFIDISLPIIEERVSKPLLWGRMNKYRSLRETDHDRYSGNVTIENIHQPRAAKKHSSSKDKSQLIHDRKCIRKLSSGETVTYQKNENLEMNGDSLMFASLMNSESRLNESPTDDSEKEASHSESNVDADSEPSESESASKQTGLFRSSSGSGVQPDGPLYPLSAGKLLYTKETDSGDKEMAEAISELRLSSTVTGDQDFDRENQPLNISNNLCFLEGKHLRSYSPQNAFQTLSQSYITTSKECSIQSCLYQFTSMELLMGNNKLLCENCTKNKQKYQEETSFAEKKVEGVYTNARKQLLISAVPAVLILHLKRFHQAGLSLRKVNRHVDFPLMLDLAPFCSATCKNASVGDKVLYGLYGIVEHSGSMREGHYTAYVKVRTPSRKLSEHNTKKKNVPGLKAADNESAGQWVHVSDTYLQVVPESRALSAQAYLLFYERVL.

Residues Met-1–Ala-14 are compositionally biased toward basic and acidic residues. The segment at Met-1 to Ser-28 is disordered. The segment at Met-1 to Cys-62 is interaction with ERCC1. Phosphoserine occurs at positions 28 and 29. The segment at Leu-36–His-153 adopts a UBP-type zinc-finger fold. Residues Cys-38, His-40, Cys-62, Cys-65, Cys-85, Cys-88, Cys-93, His-101, His-105, His-114, Cys-127, and Cys-130 each contribute to the Zn(2+) site. Residues Arg-190 to Val-813 enclose the USP domain. Cys-199 serves as the catalytic Nucleophile. Disordered regions lie at residues Ile-418–Arg-443 and Glu-479–Pro-533. Residues Ser-432–Arg-443 show a composition bias toward basic and acidic residues. Phosphoserine occurs at positions 508 and 526. The segment covering Lys-515–Gly-527 has biased composition (polar residues). Catalysis depends on His-746, which acts as the Proton acceptor.

It belongs to the peptidase C19 family. In terms of assembly, interacts with ERCC1. The catalytically active form interacts with SPDL1. In terms of tissue distribution, widely expressed. High expression is detected in the cerebellum. In the eye, it is expressed at high levels in the optic nerve, sclera and retina, with relatively low levels in the choroid, lens and retinal pigment epithelium.

The protein localises to the photoreceptor inner segment. Its subcellular location is the cytoplasm. The protein resides in the nucleus. The enzyme catalyses Thiol-dependent hydrolysis of ester, thioester, amide, peptide and isopeptide bonds formed by the C-terminal Gly of ubiquitin (a 76-residue protein attached to proteins as an intracellular targeting signal).. Catalyzes the deubiquitination of SPDL1. Plays a role in the repair of UV-induced DNA damage via deubiquitination of ERCC1, promoting its recruitment to DNA damage sites. May be involved in the maintenance of photoreceptor function. May play a role in normal retinal development. Plays a role in cell migration. This Homo sapiens (Human) protein is Ubiquitin carboxyl-terminal hydrolase 45 (USP45).